The primary structure comprises 1960 residues: Intraflagellar transport protein 172 (1960 aa).

2 WD repeats span residues 63-103 and 328-367; these read SNKD…TDKK and GFLP…YRYC. TPR repeat units lie at residues 1064-1098, 1362-1395, and 1397-1428; these read KADQ…QSYR, CDLF…QEIV, and MYLD…RSIR.

The protein belongs to the IFT172 family.

It is found in the cell projection. The protein localises to the cilium. It localises to the flagellum. Its subcellular location is the cytoplasm. The protein resides in the cytoskeleton. It is found in the flagellum axoneme. The protein localises to the flagellum basal body. Functionally, component of the intraflagellar transport complex B (IFT-B) involved in flagellar assembly. This Giardia intestinalis (strain ATCC 50803 / WB clone C6) (Giardia lamblia) protein is Intraflagellar transport protein 172.